The sequence spans 368 residues: MDRIDVHHHFIPPAYVEAFKTTGGDPSGWHLPQWTPESSLSLMDSHNTRTAILSLTAPGTSILAHSPGASATLAREINLYAAKLHNENPTRFGFFASLPHLTPDTIPAAIEEAIYALETLHADGITLYTRYTGTGYLGHDAFAPLWEELNRRKAVVFIHPTNTAADARNRSILVNPALPQPIIDYPHETCRTAVDLITSGTISRNPDVKIILSHGGGTLPILATRAAHLLYDAKLTSISPEDFLEQARSFYFDLALSGNDENMQLLVGRNGFAKGGHVFYGSDFPYAPVSTINKYVRMMEGFSVQGEEVEKAIARDSAVKLFPRFQMPADLRVGKTNNWGAFSACLLLPVGLSALYSVLQSRVHTYST.

The Zn(2+) site is built by His-7, His-9, and His-159. An N-linked (GlcNAc...) asparagine glycan is attached at Asn-169. Residue Asp-283 coordinates Zn(2+). The helical transmembrane segment at 339 to 359 threads the bilayer; that stretch reads WGAFSACLLLPVGLSALYSVL.

This sequence belongs to the metallo-dependent hydrolases superfamily. ACMSD family.

The protein localises to the membrane. The enzyme catalyses 6-methylsalicylate + H(+) = 3-methylphenol + CO2. The protein operates within secondary metabolite biosynthesis; terpenoid biosynthesis. Decarboxylase; part of the gene cluster that mediates the biosynthesis of yanuthone D, a fungal isoprenoid epoxycyclohexenone that acts as an antibiotic against fungi and bacteria. The first step of the pathway is the synthesis of 6-methylsalicylic acid (6-MSA) by the polyketide synthase yanA. 6-MSA is then converted to m-cresol by the decarboxylase yanB. The cytochrome P450 monooxygenase yanC then catalyzes the oxidation of m-cresol to toluquinol. Epoxidation of toluquinol is then performed by the short chain dehydrogenase yanD, with the help of yanE, and a further prenylation by yanG leads to 7-deacetoxyyanuthone A. The next step is the hydroxylation of C-22 of 7-deacetoxyyanuthone A by the cytochrome P450 monooxygenase yanH to yield 22-deacetylyanuthone A. O-Mevalon transferase yanI then attaches mevalon to the hydroxyl group of 22-deacetylyanuthone A to produce yanuthone E. Finally, the FAD-dependent monooxygenase yanF oxidizes the hydroxyl group at C15 of yanuthone E to form yanuthone D. Furthermore, several branching points in the pathway lead to the production of yanuthones F and G from 7-deacetoxyyanuthone A; yanuthones H and I from 22-deacetylyanuthone A; and yanuthone J from yanuthone E. In Aspergillus niger (strain ATCC 1015 / CBS 113.46 / FGSC A1144 / LSHB Ac4 / NCTC 3858a / NRRL 328 / USDA 3528.7), this protein is Decarboxylase yanB.